Reading from the N-terminus, the 561-residue chain is MRLWKSMAWGILLWHSQSGALCPAWPPARAAEEITRLQQQLADWNDIYWKQGVSAVDDSVYDQLSARLVQWQRCVGQDVSSTPVSPPLNGTTMHPVAHTGVRKLADRQAVEQWMRGRSELWVQPKVDGVAVTLVYQNGKLTRAISRGNGLQGEDWTPKIRLIPSIPQTTQGALANAVLQGEIFLQREGHIQQRMGGMNARSKVAGMLMRQDNASALNSLGIFIWAWPDGPANMPERLSQLAKAGFSLTNKYTLAVKDASEVERARQSWLTSALPFVTDGVVIRMAKEPASQHWRPGQGDWLAAWKYPPVAQVAQVSAIQFSVGKSGKITVVASLVPVILDDKRVQRVNIDSVKRWEAWDIAPGDQILVSLAGQGIPRLDEVVWRSRERSKPVPPDSHFNSLTCFYASETCQEQFISRLVWLGSRSALGLDGMGEASWRALHQTHRFKHIFSWLALTSAQIANTPGFAKGKSEQIWRQFNLARRQSFTRWIMAMDIPLTQAALQASGDRSWEQLLMRTEQHWRQLPATGERRAGRVIDWRNNPQIKTLSRWLAAQHIPGFGS.

The N6-AMP-lysine intermediate role is filled by Lys125.

It belongs to the NAD-dependent DNA ligase family. LigB subfamily.

It catalyses the reaction NAD(+) + (deoxyribonucleotide)n-3'-hydroxyl + 5'-phospho-(deoxyribonucleotide)m = (deoxyribonucleotide)n+m + AMP + beta-nicotinamide D-nucleotide.. Functionally, catalyzes the formation of phosphodiester linkages between 5'-phosphoryl and 3'-hydroxyl groups in double-stranded DNA using NAD as a coenzyme and as the energy source for the reaction. This chain is DNA ligase B, found in Salmonella enteritidis PT4 (strain P125109).